Here is a 290-residue protein sequence, read N- to C-terminus: 4-hydroxybenzoate octaprenyltransferase (290 aa).

8 consecutive transmembrane segments (helical) span residues 23–43, 46–66, 99–119, 141–161, 163–183, 213–233, 234–254, and 268–288; these read IGALLLLWPTLWALWVATPGV, LWILAVFVAGVWLMRAAGCVV, LFVVLVLISFLLVLTLNTMTI, LPQVVLGAAFGWSIPMAFAAV, ESVPLSCWLMFLANILWAVAY, LIIGILQIGVLALMAIIGELN, GLGWGYYWSILVAGALFVYQQ, and AFMNNNYVGLVLFLGLAMSYW.

Belongs to the UbiA prenyltransferase family. Mg(2+) is required as a cofactor.

Its subcellular location is the cell inner membrane. It catalyses the reaction all-trans-octaprenyl diphosphate + 4-hydroxybenzoate = 4-hydroxy-3-(all-trans-octaprenyl)benzoate + diphosphate. The protein operates within cofactor biosynthesis; ubiquinone biosynthesis. In terms of biological role, catalyzes the prenylation of para-hydroxybenzoate (PHB) with an all-trans polyprenyl group. Mediates the second step in the final reaction sequence of ubiquinone-8 (UQ-8) biosynthesis, which is the condensation of the polyisoprenoid side chain with PHB, generating the first membrane-bound Q intermediate 3-octaprenyl-4-hydroxybenzoate. The polypeptide is 4-hydroxybenzoate octaprenyltransferase (Escherichia coli O6:K15:H31 (strain 536 / UPEC)).